We begin with the raw amino-acid sequence, 111 residues long: Probable 4-amino-4-deoxy-L-arabinose-phosphoundecaprenol flippase subunit ArnE (111 aa).

Transmembrane regions (helical) follow at residues Leu-38 to Leu-58, Leu-61 to Ala-81, and Val-89 to Ser-109. The 70-residue stretch at Leu-40 to Ser-109 folds into the EamA domain.

Belongs to the ArnE family. As to quaternary structure, heterodimer of ArnE and ArnF.

It is found in the cell inner membrane. It participates in bacterial outer membrane biogenesis; lipopolysaccharide biosynthesis. Its function is as follows. Translocates 4-amino-4-deoxy-L-arabinose-phosphoundecaprenol (alpha-L-Ara4N-phosphoundecaprenol) from the cytoplasmic to the periplasmic side of the inner membrane. In Salmonella paratyphi A (strain ATCC 9150 / SARB42), this protein is Probable 4-amino-4-deoxy-L-arabinose-phosphoundecaprenol flippase subunit ArnE.